The following is a 293-amino-acid chain: Bifunctional protein FolD (293 aa).

NADP(+) contacts are provided by residues 165–167 (GRS), Thr-194, and Val-235.

Belongs to the tetrahydrofolate dehydrogenase/cyclohydrolase family. As to quaternary structure, homodimer.

It carries out the reaction (6R)-5,10-methylene-5,6,7,8-tetrahydrofolate + NADP(+) = (6R)-5,10-methenyltetrahydrofolate + NADPH. The catalysed reaction is (6R)-5,10-methenyltetrahydrofolate + H2O = (6R)-10-formyltetrahydrofolate + H(+). It participates in one-carbon metabolism; tetrahydrofolate interconversion. Its function is as follows. Catalyzes the oxidation of 5,10-methylenetetrahydrofolate to 5,10-methenyltetrahydrofolate and then the hydrolysis of 5,10-methenyltetrahydrofolate to 10-formyltetrahydrofolate. This is Bifunctional protein FolD from Syntrophus aciditrophicus (strain SB).